Consider the following 235-residue polypeptide: NAD(P)H-quinone oxidoreductase subunit K (235 aa).

[4Fe-4S] cluster-binding residues include C52, C53, C117, and C148. Positions 216–226 (AGAAVAPQLPV) are enriched in low complexity. The disordered stretch occupies residues 216-235 (AGAAVAPQLPVTEKEGRDRA).

It belongs to the complex I 20 kDa subunit family. As to quaternary structure, NDH-1 can be composed of about 15 different subunits; different subcomplexes with different compositions have been identified which probably have different functions. The cofactor is [4Fe-4S] cluster.

It is found in the cellular thylakoid membrane. The catalysed reaction is a plastoquinone + NADH + (n+1) H(+)(in) = a plastoquinol + NAD(+) + n H(+)(out). The enzyme catalyses a plastoquinone + NADPH + (n+1) H(+)(in) = a plastoquinol + NADP(+) + n H(+)(out). Functionally, NDH-1 shuttles electrons from an unknown electron donor, via FMN and iron-sulfur (Fe-S) centers, to quinones in the respiratory and/or the photosynthetic chain. The immediate electron acceptor for the enzyme in this species is believed to be plastoquinone. Couples the redox reaction to proton translocation, and thus conserves the redox energy in a proton gradient. Cyanobacterial NDH-1 also plays a role in inorganic carbon-concentration. The protein is NAD(P)H-quinone oxidoreductase subunit K of Synechococcus elongatus (strain ATCC 33912 / PCC 7942 / FACHB-805) (Anacystis nidulans R2).